The chain runs to 1845 residues: Histone-lysine N-methyltransferase, H3 lysine-79 specific (1845 aa).

The span at 1-44 (MSTNSTPRKQKLSNSKSLQNSPISPTVKKTNSFPLGNNIPTNIN) shows a compositional bias: polar residues. Disordered stretches follow at residues 1–67 (MSTN…NGIG), 83–306 (PPLP…NKWT), 450–470 (SHDI…NKNK), 486–571 (QKLK…TERK), 585–681 (RKER…NDSY), 741–767 (GETF…KKIE), 862–881 (QTTK…AETE), and 963–1102 (KDNP…SNSL). Low complexity-rich tracts occupy residues 52-67 (NNSN…NGIG), 90-162 (SSSS…QQEP), 191-226 (PSTP…SNNS), and 239-263 (NNNN…NNNN). Positions 268 to 280 (VIDDDDDDDDDEG) are enriched in acidic residues. Residues 282 to 294 (SIKSTHTSTQSTP) are compositionally biased toward polar residues. Over residues 295–304 (IRDRRQRDNK) the composition is skewed to basic and acidic residues. A compositionally biased stretch (low complexity) spans 453-464 (INNNNNNNNNNK). The segment covering 585–679 (RKERERKERK…IEKERREKND (95 aa)) has biased composition (basic and acidic residues). The interval 625-639 (KKKEKEKEKEKEKEK) is required for interaction with nucleosomes and DNA. Composition is skewed to low complexity over residues 750-763 (NNNN…NNNN), 862-877 (QTTK…TTTT), 972-1011 (NNNR…RNNN), and 1020-1067 (NNNN…NNTI). A compositionally biased stretch (basic and acidic residues) spans 1069-1080 (KKIETIKKDINK). The span at 1084 to 1102 (KTTTTTSSSSSSTSSSNSL) shows a compositional bias: low complexity. Positions 1125–1446 (FDVGIGVPVT…KDSDIVTDQT (322 aa)) constitute a DOT1 domain. S-adenosyl-L-methionine-binding positions include 1251–1254 (YGEA), 1274–1283 (FCDIGCGIGN), and E1300. Disordered regions lie at residues 1463-1559 (LQLF…NKPI), 1610-1661 (RISP…SSND), 1735-1762 (HQKS…KKEQ), 1772-1791 (NYNN…NHNN), and 1799-1845 (TDLI…DNNK). 3 stretches are compositionally biased toward low complexity: residues 1467–1522 (SSSS…TPNS), 1541–1556 (NNNN…NSNN), and 1610–1642 (RISP…SSSD). The span at 1643–1656 (NENDDDNGDDEDDS) shows a compositional bias: acidic residues. Residues 1745–1759 (RLSRKQKKLAKKNKK) are compositionally biased toward basic residues. Low complexity-rich tracts occupy residues 1799–1817 (TDLI…INND) and 1835–1845 (KDYNNINDNNK).

The protein belongs to the class I-like SAM-binding methyltransferase superfamily. DOT1 family.

It is found in the nucleus. It carries out the reaction L-lysyl(79)-[histone H3] + 3 S-adenosyl-L-methionine = N(6),N(6),N(6)-trimethyl-L-lysyl(79)-[histone H3] + 3 S-adenosyl-L-homocysteine + 3 H(+). Its function is as follows. Histone methyltransferase that specifically methylates histone H3 to form H3K79me. This methylation is required for telomere silencing, correct growth and development, and for resistance to DNA damage induced by UV LIGHT. The polypeptide is Histone-lysine N-methyltransferase, H3 lysine-79 specific (Dictyostelium discoideum (Social amoeba)).